The chain runs to 466 residues: Ribulose bisphosphate carboxylase large chain (466 aa).

Lysine 5 carries the post-translational modification N6,N6,N6-trimethyllysine. Residues asparagine 114 and threonine 164 each contribute to the substrate site. The active-site Proton acceptor is the lysine 166. Lysine 168 lines the substrate pocket. Lysine 192, aspartate 194, and glutamate 195 together coordinate Mg(2+). Position 192 is an N6-carboxylysine (lysine 192). Residue histidine 285 is the Proton acceptor of the active site. Residues arginine 286, histidine 318, and serine 370 each coordinate substrate.

Belongs to the RuBisCO large chain family. Type I subfamily. As to quaternary structure, heterohexadecamer of 8 large chains and 8 small chains; disulfide-linked. The disulfide link is formed within the large subunit homodimers. It depends on Mg(2+) as a cofactor. The disulfide bond which can form in the large chain dimeric partners within the hexadecamer appears to be associated with oxidative stress and protein turnover.

It is found in the plastid. Its subcellular location is the chloroplast. The catalysed reaction is 2 (2R)-3-phosphoglycerate + 2 H(+) = D-ribulose 1,5-bisphosphate + CO2 + H2O. It catalyses the reaction D-ribulose 1,5-bisphosphate + O2 = 2-phosphoglycolate + (2R)-3-phosphoglycerate + 2 H(+). Functionally, ruBisCO catalyzes two reactions: the carboxylation of D-ribulose 1,5-bisphosphate, the primary event in carbon dioxide fixation, as well as the oxidative fragmentation of the pentose substrate in the photorespiration process. Both reactions occur simultaneously and in competition at the same active site. The protein is Ribulose bisphosphate carboxylase large chain of Drosera capensis (Cape sundew).